The following is a 345-amino-acid chain: NADH-ubiquinone oxidoreductase chain 2 (345 aa).

10 helical membrane-spanning segments follow: residues 1-21 (MNPITLAIIYFTIFLGPVITM), 25-45 (NLMLMWVGLEFSLLAIIPMLI), 56-76 (ATKYFVTQATASMIILLAIVL), 92-114 (GLILNMTLMALSMKLGLAPFHFW), 149-171 (LNSTIILMLAITSIFMGAWGGLN), 178-198 (IMAYSSIAHMGWMLAILPYNP), 200-220 (LTLLNLMIYIILTAPMFMALM), 241-261 (LTMISLMLLSLGGLPPLTGFL), 274-294 (NCLIMATLMAMMALLNLFFYT), and 324-344 (LMFSTLAIMSTMTLPLAPQLI).

Belongs to the complex I subunit 2 family. In terms of assembly, core subunit of respiratory chain NADH dehydrogenase (Complex I) which is composed of 45 different subunits. Interacts with TMEM242.

The protein localises to the mitochondrion inner membrane. The catalysed reaction is a ubiquinone + NADH + 5 H(+)(in) = a ubiquinol + NAD(+) + 4 H(+)(out). Its function is as follows. Core subunit of the mitochondrial membrane respiratory chain NADH dehydrogenase (Complex I) which catalyzes electron transfer from NADH through the respiratory chain, using ubiquinone as an electron acceptor. Essential for the catalytic activity and assembly of complex I. This is NADH-ubiquinone oxidoreductase chain 2 from Mus musculus (Mouse).